The primary structure comprises 135 residues: MMNTKKLIKMFRKWQQRAALHRKRISFQRPSTRSTTVEKGCFVVYTADNTRFAFPISYLSNSVFQEILEISEEEFGLPTGGPITLPFDSVFLEYLIKLIKRRMDGDTEKALLMSISSARCSLQKQEQSTQQLLVF.

It belongs to the ARG7 family.

Its subcellular location is the cell membrane. Its function is as follows. May promote auxin-stimulated organ elongation, such as hypocotyls, stamen filaments and petals. This chain is Auxin-responsive protein SAUR66, found in Arabidopsis thaliana (Mouse-ear cress).